The sequence spans 369 residues: 2-aminoethylphosphonate--pyruvate transaminase (369 aa).

Residue Lys193 is modified to N6-(pyridoxal phosphate)lysine.

This sequence belongs to the class-V pyridoxal-phosphate-dependent aminotransferase family. PhnW subfamily. As to quaternary structure, homodimer. The cofactor is pyridoxal 5'-phosphate.

It carries out the reaction (2-aminoethyl)phosphonate + pyruvate = phosphonoacetaldehyde + L-alanine. Functionally, involved in phosphonate degradation. The chain is 2-aminoethylphosphonate--pyruvate transaminase from Pseudomonas fluorescens (strain Pf0-1).